The chain runs to 215 residues: Cytochrome b6 (215 aa).

A helical transmembrane segment spans residues Ile32–Phe52. Cys35 lines the heme c pocket. His86 and His100 together coordinate heme b. Helical transmembrane passes span Ala90–Phe110, Leu116–Tyr136, and Leu186–Ile206. Heme b contacts are provided by His187 and His202.

Belongs to the cytochrome b family. PetB subfamily. As to quaternary structure, the 4 large subunits of the cytochrome b6-f complex are cytochrome b6, subunit IV (17 kDa polypeptide, PetD), cytochrome f and the Rieske protein, while the 4 small subunits are PetG, PetL, PetM and PetN. The complex functions as a dimer. Requires heme b as cofactor. It depends on heme c as a cofactor.

The protein localises to the plastid. The protein resides in the chloroplast thylakoid membrane. In terms of biological role, component of the cytochrome b6-f complex, which mediates electron transfer between photosystem II (PSII) and photosystem I (PSI), cyclic electron flow around PSI, and state transitions. This chain is Cytochrome b6, found in Pinus koraiensis (Korean pine).